Reading from the N-terminus, the 1088-residue chain is Calcium-transporting ATPase 5, plasma membrane-type (1088 aa).

A compositionally biased stretch (low complexity) spans 1–11; sequence MESASSSLATS. Residues 1–32 are disordered; it reads MESASSSLATSGRRRSSSGGGGGSWGSIGSAA. The Cytoplasmic portion of the chain corresponds to 1–198; it reads MESASSSLAT…FLWDACKDLT (198 aa). The chain crosses the membrane as a helical span at residues 199–219; that stretch reads LIILMVAAAVSLALGITTEGI. Residues 220-221 are Extracellular-facing; sequence KE. Residues 222-242 form a helical membrane-spanning segment; that stretch reads GWYDGASIAFAVLLVVVVTAT. Over 243-338 the chain is Cytoplasmic; that stretch reads SDYKQSLQFQ…MSGCKVADGY (96 aa). The helical transmembrane segment at 339-359 threads the bilayer; it reads GTMLVTAVGINTEWGLLMASI. Over 360–375 the chain is Extracellular; that stretch reads SEDSGEETPLQVRLNG. The chain crosses the membrane as a helical span at residues 376–396; sequence VATFIGMVGLSVALAVLVVLL. The Cytoplasmic portion of the chain corresponds to 397 to 425; it reads ARYFTGHTYNPDGSVQYVKGKMGVGQTIR. Residues 426–446 form a helical membrane-spanning segment; that stretch reads GIVGIFTVAVTIVVVAVPEGL. The Extracellular portion of the chain corresponds to 447–851; sequence PLAVTLTLAF…GRSVYANIQK (405 aa). Asp486 serves as the catalytic 4-aspartylphosphate intermediate. Asn532, Asn569, and Asn737 each carry an N-linked (GlcNAc...) asparagine glycan. Mg(2+)-binding residues include Asp794 and Asp798. The helical transmembrane segment at 852-872 threads the bilayer; the sequence is FIQFQLTVNVAALIINVVAAV. Residues 873-880 lie on the Cytoplasmic side of the membrane; the sequence is SSGNVPLN. The chain crosses the membrane as a helical span at residues 881-901; sequence AVQLLWVNLIMDTLGALALAT. At 902–919 the chain is on the extracellular side; sequence EPPTDHLMQRPPVGRREP. Residues 920 to 940 form a helical membrane-spanning segment; it reads LITNVMWRNLIIMALFQVIVL. The Cytoplasmic segment spans residues 941 to 1000; the sequence is LTLNFRGTSLLQLKNDNQAHADKVKNTFIFNTFVLCQVFNEFNARKPDELNIFKGITGNH. Residues 1001–1021 form a helical membrane-spanning segment; the sequence is LFMAIVAITVVLQALIVEFLG. Residues 1022–1030 lie on the Extracellular side of the membrane; it reads KFTSTTRLT. A helical membrane pass occupies residues 1031–1051; that stretch reads WQLWLVSIGLAFFSWPLAFVG. Topologically, residues 1052–1088 are cytoplasmic; the sequence is KLIPVPERPLGDFFACCCPGSKQAADAKGDDADHSDV.

It belongs to the cation transport ATPase (P-type) (TC 3.A.3) family. Type IIB subfamily. Interacts with NOH1.

It is found in the cell membrane. It carries out the reaction Ca(2+)(in) + ATP + H2O = Ca(2+)(out) + ADP + phosphate + H(+). Its activity is regulated as follows. Activated by calmodulin. In terms of biological role, this magnesium-dependent enzyme catalyzes the hydrolysis of ATP coupled with the translocation of calcium from the cytosol out of the cell, into the endoplasmic reticulum, or into organelles. Involved in salt and drought stress tolerance. Involved in cold stress tolerance. The sequence is that of Calcium-transporting ATPase 5, plasma membrane-type from Oryza sativa subsp. japonica (Rice).